The primary structure comprises 108 residues: Class I hydrophobin eas (108 aa).

Residues 1 to 26 form the signal peptide; that stretch reads MQFTSVFTILAIAMTAAAAPAEVVPR. Cystine bridges form between Cys35–Cys86, Cys44–Cys80, Cys45–Cys71, and Cys87–Cys106.

This sequence belongs to the fungal hydrophobin family. Self-assembles to form functional amyloid fibrils called rodlets. Self-assembly into fibrillar rodlets occurs spontaneously at hydrophobic:hydrophilic interfaces and the rodlets further associate laterally to form amphipathic monolayers.

The protein resides in the secreted. The protein localises to the spore wall. Aerial growth, conidiation, and dispersal of filamentous fungi in the environment rely upon a capability of their secreting small amphipathic proteins called hydrophobins (HPBs) with low sequence identity. Class I can self-assemble into an outermost layer of rodlet bundles on aerial cell surfaces, conferring cellular hydrophobicity that supports fungal growth, development and dispersal; whereas class II form highly ordered films at water-air interfaces through intermolecular interactions but contribute nothing to the rodlet structure. Eas is a class I hydrophobin that forms functional amyloid fibrils called rodlets that facilitate spore formation and dispersal. This Neurospora crassa (strain ATCC 24698 / 74-OR23-1A / CBS 708.71 / DSM 1257 / FGSC 987) protein is Class I hydrophobin eas.